A 100-amino-acid polypeptide reads, in one-letter code: MKKRLTEAQFQTAIKGLEIGQQTIDIARGVLVDGRPQAEFVTSLGLTKGAVSQAVSRVWAAAGEQLPEGFERVTAVLPEHQAFIVKKWEADAKRKQEPKS.

Residues Gln-37–Ser-56 constitute a DNA-binding region (H-T-H motif).

In terms of biological role, in conjunction with KorB, inhibits the transcription of kilA, trfA and korAB operons. In conjunction with KorC is responsible for the negative control of kilC and kilE operons. The chain is TrfB transcriptional repressor protein (trfB) from Escherichia coli.